The chain runs to 255 residues: Reaction center protein L chain (255 aa).

A run of 3 helical transmembrane segments spans residues 12–35 (GFFG…GTAL), 64–92 (GLWQ…RKLG), and 95–120 (LHIP…LLLG). (7R,8Z)-bacteriochlorophyll b contacts are provided by histidine 133 and histidine 153. The chain crosses the membrane as a helical span at residues 150-179 (NPAHMIGITFFFTNCMAFGMHGSIILSVLN). Residue histidine 170 coordinates Fe cation. Phenylalanine 196 serves as a coordination point for a ubiquinone. Residues 205–231 (GTLGIHRLGVFLAISAAFWSAVCIILS) traverse the membrane as a helical segment. Position 210 (histidine 210) interacts with Fe cation.

It belongs to the reaction center PufL/M/PsbA/D family. In terms of assembly, reaction center is composed of four bacteriochlorophylls, two bacteriopheophytins, two ubiquinones, one iron, and three highly hydrophobic polypeptide chains (designated L, M, and H).

The protein resides in the cellular chromatophore membrane. The reaction center is a membrane-bound complex that mediates the initial photochemical event in the electron transfer process of photosynthesis. The protein is Reaction center protein L chain (pufL) of Pararhodospirillum photometricum (Rhodospirillum photometricum).